The primary structure comprises 346 residues: Methylthioribose-1-phosphate isomerase (346 aa).

Residues 46-48 (RGA), R89, and Q196 each bind substrate. The active-site Proton donor is D237. A substrate-binding site is contributed by 247-248 (NK).

This sequence belongs to the eIF-2B alpha/beta/delta subunits family. MtnA subfamily.

It catalyses the reaction 5-(methylsulfanyl)-alpha-D-ribose 1-phosphate = 5-(methylsulfanyl)-D-ribulose 1-phosphate. It functions in the pathway amino-acid biosynthesis; L-methionine biosynthesis via salvage pathway; L-methionine from S-methyl-5-thio-alpha-D-ribose 1-phosphate: step 1/6. In terms of biological role, catalyzes the interconversion of methylthioribose-1-phosphate (MTR-1-P) into methylthioribulose-1-phosphate (MTRu-1-P). The polypeptide is Methylthioribose-1-phosphate isomerase (Citrifermentans bemidjiense (strain ATCC BAA-1014 / DSM 16622 / JCM 12645 / Bem) (Geobacter bemidjiensis)).